Consider the following 366-residue polypeptide: 5-formaminoimidazole-4-carboxamide-1-(beta)-D-ribofuranosyl 5'-monophosphate synthetase (366 aa).

5-amino-1-(5-phospho-beta-D-ribosyl)imidazole-4-carboxamide-binding residues include H27 and S96. Positions 131 to 357 (RKWLEDAGVP…IAREIKEAVK (227 aa)) constitute an ATP-grasp domain. ATP-binding positions include 154 to 208 (PVIV…VRFY) and E239. N263 lines the 5-amino-1-(5-phospho-beta-D-ribosyl)imidazole-4-carboxamide pocket. E302 and E315 together coordinate Mg(2+).

It belongs to the phosphohexose mutase family. The cofactor is Mg(2+). Mn(2+) is required as a cofactor.

It carries out the reaction 5-amino-1-(5-phospho-beta-D-ribosyl)imidazole-4-carboxamide + formate + ATP = 5-formamido-1-(5-phospho-D-ribosyl)imidazole-4-carboxamide + ADP + phosphate. The protein operates within purine metabolism; IMP biosynthesis via de novo pathway; 5-formamido-1-(5-phospho-D-ribosyl)imidazole-4-carboxamide from 5-amino-1-(5-phospho-D-ribosyl)imidazole-4-carboxamide (formate route): step 1/1. Functionally, catalyzes the ATP- and formate-dependent formylation of 5-aminoimidazole-4-carboxamide-1-beta-d-ribofuranosyl 5'-monophosphate (AICAR) to 5-formaminoimidazole-4-carboxamide-1-beta-d-ribofuranosyl 5'-monophosphate (FAICAR) in the absence of folates. The sequence is that of 5-formaminoimidazole-4-carboxamide-1-(beta)-D-ribofuranosyl 5'-monophosphate synthetase from Korarchaeum cryptofilum (strain OPF8).